The primary structure comprises 257 residues: Type III pantothenate kinase (257 aa).

Residue 6–13 (DVGNTNTV) participates in ATP binding. Substrate contacts are provided by residues Y100 and 107 to 110 (GADR). The active-site Proton acceptor is D109. D129 contributes to the K(+) binding site. An ATP-binding site is contributed by T132. T185 contacts substrate.

It belongs to the type III pantothenate kinase family. In terms of assembly, homodimer. NH4(+) serves as cofactor. Requires K(+) as cofactor.

Its subcellular location is the cytoplasm. The catalysed reaction is (R)-pantothenate + ATP = (R)-4'-phosphopantothenate + ADP + H(+). The protein operates within cofactor biosynthesis; coenzyme A biosynthesis; CoA from (R)-pantothenate: step 1/5. Functionally, catalyzes the phosphorylation of pantothenate (Pan), the first step in CoA biosynthesis. The polypeptide is Type III pantothenate kinase (Desulfatibacillum aliphaticivorans).